Consider the following 111-residue polypeptide: Putative pterin-4-alpha-carbinolamine dehydratase (111 aa).

This sequence belongs to the pterin-4-alpha-carbinolamine dehydratase family.

It catalyses the reaction (4aS,6R)-4a-hydroxy-L-erythro-5,6,7,8-tetrahydrobiopterin = (6R)-L-erythro-6,7-dihydrobiopterin + H2O. The polypeptide is Putative pterin-4-alpha-carbinolamine dehydratase (Alkaliphilus metalliredigens (strain QYMF)).